The following is a 247-amino-acid chain: Anamorsin homolog (247 aa).

Positions 4 to 128 are N-terminal SAM-like domain; it reads FKGLQKSLYI…ETGSSARLSF (125 aa). The segment at 129-160 is linker; the sequence is AKKNASALNVWKISGDDEELIDEEDLLDEEDK. Cys171, Cys180, Cys183, and Cys185 together coordinate [2Fe-2S] cluster. Residues 171–185 are fe-S binding site A; sequence CSTTGKRKACKNCSC. Cys208, Cys211, Cys219, and Cys222 together coordinate [4Fe-4S] cluster. 2 short sequence motifs (cx2C motif) span residues 208–211 and 219–222; these read CGNC and CSTC. Positions 208–222 are fe-S binding site B; that stretch reads CGNCYLGDAFRCSTC.

The protein belongs to the anamorsin family. As to quaternary structure, monomer. [2Fe-2S] cluster is required as a cofactor. Requires [4Fe-4S] cluster as cofactor.

The protein localises to the cytoplasm. It is found in the mitochondrion intermembrane space. In terms of biological role, component of the cytosolic iron-sulfur (Fe-S) protein assembly (CIA) machinery. Required for the maturation of extramitochondrial Fe-S proteins. Part of an electron transfer chain functioning in an early step of cytosolic Fe-S biogenesis, facilitating the de novo assembly of a [4Fe-4S] cluster on the cytosolic Fe-S scaffold complex. Electrons are transferred from NADPH via a FAD- and FMN-containing diflavin oxidoreductase. Together with the diflavin oxidoreductase, also required for the assembly of the diferric tyrosyl radical cofactor of ribonucleotide reductase (RNR), probably by providing electrons for reduction during radical cofactor maturation in the catalytic small subunit. This Drosophila persimilis (Fruit fly) protein is Anamorsin homolog.